The following is a 432-amino-acid chain: Alpha-2 adrenergic receptor (432 aa).

Residues 1–32 (MDPLNATGMDAFTAIHLNASWSADSGYSLAAI) are Extracellular-facing. N-linked (GlcNAc...) asparagine glycans are attached at residues N5 and N18. A helical membrane pass occupies residues 33 to 57 (ASIAALVSFLILFTVVGNILVVIAV). Residues 58–69 (LTSRALKAPQNL) are Cytoplasmic-facing. A helical membrane pass occupies residues 70 to 95 (FLVSLATADILVATLVMPFSLANELM). The Extracellular portion of the chain corresponds to 96 to 105 (GYWYFGKVWC). C105 and C183 form a disulfide bridge. A helical membrane pass occupies residues 106–128 (GIYLALDVLFCTSSIVHLCAISL). Topologically, residues 129–149 (DRYWSVTQAVEYNLKRTPKRV) are cytoplasmic. Residues 150 to 172 (KCIIVIVWLISAFISSPPLLSID) form a helical membrane-spanning segment. Residues 173-188 (SNNYISSQPQCMLNDD) are Extracellular-facing. The helical transmembrane segment at 189-212 (TWYILSSSMASFFAPCLIMILVYI) threads the bilayer. Residues 213–356 (RIYQVAKTRT…QAREKRFTFV (144 aa)) are Cytoplasmic-facing. A disordered region spans residues 222 to 319 (TRSMSGKEPR…SISKQSARIS (98 aa)). 2 stretches are compositionally biased toward polar residues: residues 235-246 (VTQTENGLNKAN) and 265-275 (SQRTVTIGQQT). A compositionally biased stretch (basic and acidic residues) spans 288–300 (GKGHKPQRQDSQR). Positions 309 to 319 (SSISKQSARIS) are enriched in polar residues. The helical transmembrane segment at 357–380 (LAVVMGVFVVCWFPFFFSYSLHAV) threads the bilayer. Residues 381 to 393 (CRDYCKIPDTLFK) lie on the Extracellular side of the membrane. A helical membrane pass occupies residues 394 to 413 (FFWIGYCNSSLNPAIYTIFN). Residues 414 to 432 (RDFRRAFQKILCKSWKKSF) lie on the Cytoplasmic side of the membrane.

This sequence belongs to the G-protein coupled receptor 1 family.

Its subcellular location is the cell membrane. Functionally, alpha-2 adrenergic receptors mediate the catecholamine-induced inhibition of adenylate cyclase through the action of G proteins. In Labrus ossifagus (Cuckoo wrasse), this protein is Alpha-2 adrenergic receptor.